The following is a 1217-amino-acid chain: MFLYNLTLQRATGISFAIHGNFSGTKQQEIVVSRGKILELLRPDPNTGKVHTLLTVEVFGVIRSLMAFRLTGGTKDYIVVGSDSGRIVILEYQPSKNMFEKIHQETFGKSGCRRIVPGQFLAVDPKGRAVMISAIEKQKLVYILNRDAAARLTISSPLEAHKANTLVYHVVGVDVGFENPMFACLEMDYEEADNDPTGEAAANTQQTLTFYELDLGLNHVVRKYSEPLEEHGNFLITVPGGSDGPSGVLICSENYITYKNFGDQPDIRCPIPRRRNDLDDPERGMIFVCSATHKTKSMFFFLAQTEQGDIFKITLETDEDMVTEIRLKYFDTVPVAAAMCVLKTGFLFVASEFGNHYLYQIAHLGDDDEEPEFSSAMPLEEGDTFFFQPRPLKNLVLVDELDSLSPILFCQIADLANEDTPQLYVACGRGPRSSLRVLRHGLEVSETAVSELPGNPNAVWTVRRHIEDEFDAYIIVSFVNATLVLSIGETVEEVTDSGFLGTTPTLSCSLLGDDALVQVYPDGIRHIRADKRVNEWKTPGKKTIVKCAVNQRQVVIALTGGELVYFEMDPSGQLNEYTERKEMSADVVCMSLANVPPGEQRSRFLAVGLVDNTVRIISLDPSDCLQPLSMQALPAQPESLCIVEMGGTEKQDELGERGSIGFLYLNIGLQNGVLLRTVLDPVTGDLSDTRTRYLGSRPVKLFRVRMQGQEAVLAMSSRSWLSYSYQSRFHLTPLSYETLEFASGFASEQCPEGIVAISTNTLRILALEKLGAVFNQVAFPLQYTPRKFVIHPESNNLIIIETDHNAYTEATKAQRKQQMAEEMVEAAGEDERELAAEMAAAFLNENLPESIFGAPKAGSGQWASVIRVMNPIQGNTLDLVQLEQNEAAFSVAVCRFSNTGEDWYVLVGVAKDLILNPRSVAGGFVYTYKLVNNGEKLEFLHKTPVEEVPAAIAPFQGRVLIGVGKLLRVYDLGKKKLLRKCENKHIANYISGIQTIGHRVIVSDVQESFIWVRYKRNENQLIIFADDTYPRWVTTASLLDYDTVAGADKFGNICVVRLPPNTNDEVDEDPTGNKALRDRGLLNGASQKAEVIMNYHVGETVLSLQKTTLIPGGSESLVYTTLSGGIGILVPFTSHEDHDFFQHVEMHLRSEHPPLCGRDHLSFRSYYFPVKNVIDGDLCEQFNSMEPNKQKNVSEELDRTPPEVTKKLEDIRTRYAF.

Interaction with PHF5A, SF3B1 and SF3B5 stretches follow at residues 105 to 119 and 145 to 168; these read ETFGKSGCRRIVPGQ and NRDAAARLTISSPLEAHKANTLVY. The residue at position 156 (Ser-156) is a Phosphoserine. Interaction with SF3B1 and SF3B5 stretches follow at residues 193–231 and 786–804; these read DNDPTGEAAANTQQTLTFYELDLGLNHVVRKYSEPLEEH and RKFVIHPESNNLIIIETDH. Residues 1028-1049 form an interaction with SF3B1 region; sequence TYPRWVTTASLLDYDTVAGADK. The tract at residues 1100–1123 is interaction with SF3B5; sequence TVLSLQKTTLIPGGSESLVYTTLS. Thr-1200 bears the Phosphothreonine mark.

This sequence belongs to the RSE1 family. As to quaternary structure, component of the 17S U2 SnRNP complex, a ribonucleoprotein complex that contains small nuclear RNA (snRNA) U2 and a number of specific proteins. Part of the SF3B subcomplex of the 17S U2 SnRNP complex. SF3B associates with the splicing subcomplex SF3A and a 12S RNA unit to form the U2 small nuclear ribonucleoproteins complex (U2 snRNP). Within the SF3B subcomplex, interacts directly with SF3B1 (via HEAT domain), SF3B5 and PHF5A. Identified in the spliceosome A complex; remains associated with the spliceosome throughout the splicing process. Component of the spliceosome B complex. Identified in the spliceosome C complex. Identified in the spliceosome E complex. Component of the minor (U12-type spliceosome) spliceosome. Within this complex, interacts with SCNM1. Associates with the STAGA transcription coactivator-HAT complex. Interacts with SUPT3H. Interacts with TAF3.

Its subcellular location is the nucleus. Functionally, component of the 17S U2 SnRNP complex of the spliceosome, a large ribonucleoprotein complex that removes introns from transcribed pre-mRNAs. The 17S U2 SnRNP complex (1) directly participates in early spliceosome assembly and (2) mediates recognition of the intron branch site during pre-mRNA splicing by promoting the selection of the pre-mRNA branch-site adenosine, the nucleophile for the first step of splicing. Within the 17S U2 SnRNP complex, SF3B3 is part of the SF3B subcomplex, which is required for 'A' complex assembly formed by the stable binding of U2 snRNP to the branchpoint sequence in pre-mRNA. Sequence independent binding of SF3A and SF3B subcomplexes upstream of the branch site is essential, it may anchor U2 snRNP to the pre-mRNA. May also be involved in the assembly of the 'E' complex. Also acts as a component of the minor spliceosome, which is involved in the splicing of U12-type introns in pre-mRNAs. The protein is Splicing factor 3B subunit 3 (SF3B3) of Pongo abelii (Sumatran orangutan).